We begin with the raw amino-acid sequence, 515 residues long: Fatty acyl-CoA reductase 1 (515 aa).

At 1-465 (MVSIPEYYEG…ARKHLNKLRN (465 aa)) the chain is on the cytoplasmic side. Residues 466–483 (IRYGFNTILVILIWRIFI) form a helical membrane-spanning segment. Over 484 to 515 (ARSQMARNIWYFVVSLCYKFLSYFRASSTMRY) the chain is Peroxisomal.

Belongs to the fatty acyl-CoA reductase family.

It is found in the peroxisome membrane. The enzyme catalyses a long-chain fatty acyl-CoA + 2 NADPH + 2 H(+) = a long-chain primary fatty alcohol + 2 NADP(+) + CoA. It carries out the reaction hexadecanoyl-CoA + 2 NADPH + 2 H(+) = hexadecan-1-ol + 2 NADP(+) + CoA. It catalyses the reaction octadecanoyl-CoA + 2 NADPH + 2 H(+) = octadecan-1-ol + 2 NADP(+) + CoA. The catalysed reaction is (9Z)-octadecenoyl-CoA + 2 NADPH + 2 H(+) = (9Z)-octadecen-1-ol + 2 NADP(+) + CoA. The enzyme catalyses (9Z,12Z)-octadecadienoyl-CoA + 2 NADPH + 2 H(+) = (9Z,12Z)-octadecadien-1-ol + 2 NADP(+) + CoA. It carries out the reaction eicosanoyl-CoA + 2 NADPH + 2 H(+) = eicosan-1-ol + 2 NADP(+) + CoA. It catalyses the reaction 16-methylheptadecanoyl-CoA + 2 NADPH + 2 H(+) = 16-methylheptadecan-1-ol + 2 NADP(+) + CoA. The catalysed reaction is 18-methylnonadecanoyl-CoA + 2 NADPH + 2 H(+) = 18-methylnonadecan-1-ol + 2 NADP(+) + CoA. Its function is as follows. Catalyzes the reduction of saturated and unsaturated C16 or C18 fatty acyl-CoA to fatty alcohols. It plays an essential role in the production of ether lipids/plasmalogens which synthesis requires fatty alcohols. In parallel, it is also required for wax monoesters production since fatty alcohols also constitute a substrate for their synthesis. The protein is Fatty acyl-CoA reductase 1 of Gallus gallus (Chicken).